The primary structure comprises 507 residues: ATP synthase subunit alpha, chloroplastic (507 aa).

170-177 (GDRQTGKT) serves as a coordination point for ATP. Thr257 carries the post-translational modification Phosphothreonine.

It belongs to the ATPase alpha/beta chains family. F-type ATPases have 2 components, CF(1) - the catalytic core - and CF(0) - the membrane proton channel. CF(1) has five subunits: alpha(3), beta(3), gamma(1), delta(1), epsilon(1). CF(0) has four main subunits: a, b, b' and c.

The protein localises to the plastid. It localises to the chloroplast thylakoid membrane. It catalyses the reaction ATP + H2O + 4 H(+)(in) = ADP + phosphate + 5 H(+)(out). Its function is as follows. Produces ATP from ADP in the presence of a proton gradient across the membrane. The alpha chain is a regulatory subunit. The chain is ATP synthase subunit alpha, chloroplastic from Lobularia maritima (Sweet alyssum).